A 189-amino-acid polypeptide reads, in one-letter code: MGDKIFHNLSGKTLVATPHVITKGIYHKSLIYMLSHTEEGAIGLIFNRLVNHIDLKSFFKIKNDEITTPVMVPIYLGGPVEHEKGFFLHSSDYNKNLLLDFHNDLAVSSNLEISEDIAFGKGPKNSLFIVGYTAWKPGQLEEELETNLWLVMDCNKEFIFADNPESKWHNALKHLGIDEIHFSSQIGNA.

This sequence belongs to the UPF0301 (AlgH) family.

The sequence is that of UPF0301 protein RC0043 from Rickettsia conorii (strain ATCC VR-613 / Malish 7).